The primary structure comprises 603 residues: Elongation factor 4 (603 aa).

Residues 6-188 form the tr-type G domain; it reads KYVRNFSIIA…DIVKNVPAPI (183 aa). GTP-binding positions include 18–23 and 135–138; these read DHGKST and NKID.

Belongs to the TRAFAC class translation factor GTPase superfamily. Classic translation factor GTPase family. LepA subfamily.

Its subcellular location is the cell membrane. It carries out the reaction GTP + H2O = GDP + phosphate + H(+). Its function is as follows. Required for accurate and efficient protein synthesis under certain stress conditions. May act as a fidelity factor of the translation reaction, by catalyzing a one-codon backward translocation of tRNAs on improperly translocated ribosomes. Back-translocation proceeds from a post-translocation (POST) complex to a pre-translocation (PRE) complex, thus giving elongation factor G a second chance to translocate the tRNAs correctly. Binds to ribosomes in a GTP-dependent manner. This chain is Elongation factor 4, found in Finegoldia magna (strain ATCC 29328 / DSM 20472 / WAL 2508) (Peptostreptococcus magnus).